Here is a 309-residue protein sequence, read N- to C-terminus: Olfactory receptor 10V1 (309 aa).

The Extracellular portion of the chain corresponds to M1–M25. Residue N5 is glycosylated (N-linked (GlcNAc...) asparagine). The helical transmembrane segment at L26–A46 threads the bilayer. The Cytoplasmic segment spans residues V47 to S54. Residues L55 to S75 traverse the membrane as a helical segment. The Extracellular segment spans residues S76–T100. C98 and C190 are disulfide-bonded. Residues Q101–Y121 form a helical membrane-spanning segment. Residues D122 to S140 are Cytoplasmic-facing. A helical transmembrane segment spans residues L141–T161. The Extracellular portion of the chain corresponds to I162 to T198. The helical transmembrane segment at A199–S218 threads the bilayer. Topologically, residues Y219 to A238 are cytoplasmic. A helical transmembrane segment spans residues Y239 to I259. Topologically, residues Y260–G272 are extracellular. Residues R273–L293 form a helical membrane-spanning segment. Over R294 to F309 the chain is Cytoplasmic.

Belongs to the G-protein coupled receptor 1 family.

The protein localises to the cell membrane. Its function is as follows. Odorant receptor. The polypeptide is Olfactory receptor 10V1 (OR10V1) (Homo sapiens (Human)).